We begin with the raw amino-acid sequence, 257 residues long: Imidazole glycerol phosphate synthase subunit HisF (257 aa).

Residues Asp-12 and Asp-131 contribute to the active site.

Belongs to the HisA/HisF family. As to quaternary structure, heterodimer of HisH and HisF.

The protein localises to the cytoplasm. The enzyme catalyses 5-[(5-phospho-1-deoxy-D-ribulos-1-ylimino)methylamino]-1-(5-phospho-beta-D-ribosyl)imidazole-4-carboxamide + L-glutamine = D-erythro-1-(imidazol-4-yl)glycerol 3-phosphate + 5-amino-1-(5-phospho-beta-D-ribosyl)imidazole-4-carboxamide + L-glutamate + H(+). Its pathway is amino-acid biosynthesis; L-histidine biosynthesis; L-histidine from 5-phospho-alpha-D-ribose 1-diphosphate: step 5/9. IGPS catalyzes the conversion of PRFAR and glutamine to IGP, AICAR and glutamate. The HisF subunit catalyzes the cyclization activity that produces IGP and AICAR from PRFAR using the ammonia provided by the HisH subunit. The protein is Imidazole glycerol phosphate synthase subunit HisF of Paraburkholderia phytofirmans (strain DSM 17436 / LMG 22146 / PsJN) (Burkholderia phytofirmans).